The following is a 199-amino-acid chain: uncharacterized protein (199 aa).

This is an uncharacterized protein from Shigella flexneri.